We begin with the raw amino-acid sequence, 338 residues long: Anthranilate phosphoribosyltransferase (338 aa).

Residues Gly81, Gly84 to Asp85, Thr89, Asn91 to Thr94, Lys109 to Ser117, and Ala121 contribute to the 5-phospho-alpha-D-ribose 1-diphosphate site. Gly81 is an anthranilate binding site. Position 93 (Ser93) interacts with Mg(2+). Asn112 contributes to the anthranilate binding site. An anthranilate-binding site is contributed by Arg167. Mg(2+) is bound by residues Asp225 and Glu226.

It belongs to the anthranilate phosphoribosyltransferase family. As to quaternary structure, homodimer. The cofactor is Mg(2+).

It carries out the reaction N-(5-phospho-beta-D-ribosyl)anthranilate + diphosphate = 5-phospho-alpha-D-ribose 1-diphosphate + anthranilate. Its pathway is amino-acid biosynthesis; L-tryptophan biosynthesis; L-tryptophan from chorismate: step 2/5. In terms of biological role, catalyzes the transfer of the phosphoribosyl group of 5-phosphorylribose-1-pyrophosphate (PRPP) to anthranilate to yield N-(5'-phosphoribosyl)-anthranilate (PRA). The protein is Anthranilate phosphoribosyltransferase of Chelativorans sp. (strain BNC1).